Reading from the N-terminus, the 127-residue chain is MSLLRNRLQALPALCLCVLVLACIGACQPEAQEGTLSPPPKLKMSRWSLVRGRMKELLETVVNRTRDGWQWFWSPSTFRGFMQTYYDDHLRDLGPLTKAWFLESKDSLLKKTHSLCPRLVCGDKDQG.

Positions 1–27 (MSLLRNRLQALPALCLCVLVLACIGAC) are cleaved as a signal peptide. The N-linked (GlcNAc...) asparagine glycan is linked to Asn63.

It belongs to the apolipoprotein C4 family. In terms of tissue distribution, expressed by the liver and secreted in plasma.

The protein localises to the secreted. May participate in lipoprotein metabolism. In Homo sapiens (Human), this protein is Apolipoprotein C-IV (APOC4).